The sequence spans 248 residues: MIAFIEPFLASKSLANNSQQAYRYDLRQFCQQVGQRINPETLALYQQSLSSLTAAAKKRKLSTVNQFLYYLYQQRVLADYFKMDDRIEASFSLKPQLTRLDTSAFYAETAFLKGQLIALLILELGLTPSEIAGLRLADFDLGLQVLRLQSHRGIRVMTLSRTLLPFLERAAEAQQLYLFDHDAKPFSRQWFFNQLRDFLESIGCAELSAQSLREQFILNEKAAGKSIIEVAQLLGLKSPITLEKYYKM.

Residues 1–72 (MIAFIEPFLA…TVNQFLYYLY (72 aa)) form the Core-binding (CB) domain. In terms of domain architecture, Tyr recombinase spans 92-248 (SLKPQLTRLD…PITLEKYYKM (157 aa)). Arg-213 is a catalytic residue. Tyr-245 functions as the O-(3'-phospho-DNA)-tyrosine intermediate in the catalytic mechanism.

This sequence belongs to the 'phage' integrase family. XerD-like subfamily.

The protein resides in the cytoplasm. Putative tyrosine recombinase. Not involved in the cutting and rejoining of the recombining DNA molecules on dif(SL) site. This chain is Tyrosine recombinase XerD-like, found in Streptococcus equi subsp. zooepidemicus (strain H70).